A 283-amino-acid chain; its full sequence is Thymidylate synthase (283 aa).

DUMP is bound at residue Arg-22. Catalysis depends on Cys-160, which acts as the Nucleophile. DUMP is bound by residues 180 to 183 (RSCD), Asn-191, and 221 to 223 (HIY). Asp-183 lines the (6R)-5,10-methylene-5,6,7,8-tetrahydrofolate pocket. Ala-282 provides a ligand contact to (6R)-5,10-methylene-5,6,7,8-tetrahydrofolate.

It belongs to the thymidylate synthase family. Bacterial-type ThyA subfamily. In terms of assembly, homodimer.

It is found in the cytoplasm. It catalyses the reaction dUMP + (6R)-5,10-methylene-5,6,7,8-tetrahydrofolate = 7,8-dihydrofolate + dTMP. The protein operates within pyrimidine metabolism; dTTP biosynthesis. In terms of biological role, catalyzes the reductive methylation of 2'-deoxyuridine-5'-monophosphate (dUMP) to 2'-deoxythymidine-5'-monophosphate (dTMP) while utilizing 5,10-methylenetetrahydrofolate (mTHF) as the methyl donor and reductant in the reaction, yielding dihydrofolate (DHF) as a by-product. This enzymatic reaction provides an intracellular de novo source of dTMP, an essential precursor for DNA biosynthesis. The polypeptide is Thymidylate synthase (Idiomarina loihiensis (strain ATCC BAA-735 / DSM 15497 / L2-TR)).